Consider the following 341-residue polypeptide: Anthranilate phosphoribosyltransferase (341 aa).

Residues G84, 87 to 88, T92, 94 to 97, 112 to 120, and S124 each bind 5-phospho-alpha-D-ribose 1-diphosphate; these read GD, NIST, and KHGNRSVSS. Residue G84 coordinates anthranilate. Residue S96 participates in Mg(2+) binding. Anthranilate is bound at residue N115. R170 is an anthranilate binding site. The Mg(2+) site is built by D229 and E230.

It belongs to the anthranilate phosphoribosyltransferase family. In terms of assembly, homodimer. It depends on Mg(2+) as a cofactor.

It catalyses the reaction N-(5-phospho-beta-D-ribosyl)anthranilate + diphosphate = 5-phospho-alpha-D-ribose 1-diphosphate + anthranilate. It participates in amino-acid biosynthesis; L-tryptophan biosynthesis; L-tryptophan from chorismate: step 2/5. Catalyzes the transfer of the phosphoribosyl group of 5-phosphorylribose-1-pyrophosphate (PRPP) to anthranilate to yield N-(5'-phosphoribosyl)-anthranilate (PRA). The sequence is that of Anthranilate phosphoribosyltransferase from Polynucleobacter necessarius subsp. necessarius (strain STIR1).